The sequence spans 148 residues: SsrA-binding protein (148 aa).

The protein belongs to the SmpB family.

The protein localises to the cytoplasm. Its function is as follows. Required for rescue of stalled ribosomes mediated by trans-translation. Binds to transfer-messenger RNA (tmRNA), required for stable association of tmRNA with ribosomes. tmRNA and SmpB together mimic tRNA shape, replacing the anticodon stem-loop with SmpB. tmRNA is encoded by the ssrA gene; the 2 termini fold to resemble tRNA(Ala) and it encodes a 'tag peptide', a short internal open reading frame. During trans-translation Ala-aminoacylated tmRNA acts like a tRNA, entering the A-site of stalled ribosomes, displacing the stalled mRNA. The ribosome then switches to translate the ORF on the tmRNA; the nascent peptide is terminated with the 'tag peptide' encoded by the tmRNA and targeted for degradation. The ribosome is freed to recommence translation, which seems to be the essential function of trans-translation. This chain is SsrA-binding protein, found in Burkholderia ambifaria (strain ATCC BAA-244 / DSM 16087 / CCUG 44356 / LMG 19182 / AMMD) (Burkholderia cepacia (strain AMMD)).